The primary structure comprises 629 residues: Dehydrogenase pyvF (629 aa).

The signal sequence occupies residues 1 to 22 (MAGSPFTTALLSAWTLSTVAVG). FAD is bound by residues 61 to 62 (AS) and 82 to 83 (EA). Asn92 carries an N-linked (GlcNAc...) asparagine glycan. 144-147 (NLMA) lines the FAD pocket. Asn172, Asn182, Asn256, Asn284, Asn312, and Asn421 each carry an N-linked (GlcNAc...) asparagine glycan. His552 acts as the Proton acceptor in catalysis. Residues Ala586 and 597-598 (PL) contribute to the FAD site.

It belongs to the GMC oxidoreductase family. In terms of assembly, homodimer. It depends on FAD as a cofactor.

The protein operates within secondary metabolite biosynthesis. Dehydrogenase; part of the gene cluster that mediates the biosynthesis of pyranoviolin A, a pyranonigrin analog with a C-3 methoxy group. Initially, the PKS portion of pyvA synthesizes C-10 carbon chain from 5 molecules of malonyl-CoA, which is then condensed with the thiolation (T) domain-bound glycine activated by the adenylation (A) domain. The subsequent chain release by Dieckmann condensation (DKC) could be catalyzed by the TE domain present at the C-terminus of pyvA and/or the alpha/beta hydrolase pyvD, installing the tetramic acid moiety. The FAD-dependent monooxygenase pyvC next epoxidizes one of the olefins of the polyketide part, and the epoxide ring-opening induces the dihydro-gamma-pyrone ring formation. The cytochrome P450 monooxygeanse pyvB would be responsible for the 2 consecutive reactions, in which the dihydro-gamma-pyrone is oxidized to gamma-pyrone and C-7 is hydroxylated to yield pyranonigrin F. Finally, the O-methyltransferase pyvH methylates the C-3 hydroxy group to complete the biosynthesis. In Aspergillus violaceofuscus (strain CBS 115571), this protein is Dehydrogenase pyvF.